Reading from the N-terminus, the 157-residue chain is Endoribonuclease YbeY (157 aa).

The Zn(2+) site is built by His-113, His-117, and His-123.

It belongs to the endoribonuclease YbeY family. It depends on Zn(2+) as a cofactor.

It localises to the cytoplasm. Its function is as follows. Single strand-specific metallo-endoribonuclease involved in late-stage 70S ribosome quality control and in maturation of the 3' terminus of the 16S rRNA. The chain is Endoribonuclease YbeY from Ehrlichia ruminantium (strain Gardel).